We begin with the raw amino-acid sequence, 158 residues long: 3-hydroxyacyl-[acyl-carrier-protein] dehydratase FabZ (158 aa).

The active site involves His-62.

It belongs to the thioester dehydratase family. FabZ subfamily.

The protein resides in the cytoplasm. It catalyses the reaction a (3R)-hydroxyacyl-[ACP] = a (2E)-enoyl-[ACP] + H2O. Functionally, involved in unsaturated fatty acids biosynthesis. Catalyzes the dehydration of short chain beta-hydroxyacyl-ACPs and long chain saturated and unsaturated beta-hydroxyacyl-ACPs. The protein is 3-hydroxyacyl-[acyl-carrier-protein] dehydratase FabZ of Novosphingobium aromaticivorans (strain ATCC 700278 / DSM 12444 / CCUG 56034 / CIP 105152 / NBRC 16084 / F199).